The primary structure comprises 239 residues: 7-cyano-7-deazaguanine synthase (239 aa).

8 to 18 (FSGGLDSTACL) provides a ligand contact to ATP. Residues Cys-194, Cys-209, Cys-212, and Cys-215 each coordinate Zn(2+).

It belongs to the QueC family. Zn(2+) is required as a cofactor.

The enzyme catalyses 7-carboxy-7-deazaguanine + NH4(+) + ATP = 7-cyano-7-deazaguanine + ADP + phosphate + H2O + H(+). The protein operates within purine metabolism; 7-cyano-7-deazaguanine biosynthesis. Catalyzes the ATP-dependent conversion of 7-carboxy-7-deazaguanine (CDG) to 7-cyano-7-deazaguanine (preQ(0)). The chain is 7-cyano-7-deazaguanine synthase from Pyrococcus horikoshii (strain ATCC 700860 / DSM 12428 / JCM 9974 / NBRC 100139 / OT-3).